The sequence spans 267 residues: Non-structural protein NS-S (267 aa).

The protein belongs to the phlebovirus NS-S protein family.

The polypeptide is Non-structural protein NS-S (NSS) (Homo sapiens (Human)).